The following is a 318-amino-acid chain: Ribose-phosphate pyrophosphokinase 1 (318 aa).

Residues 43–45 (DGE) and 102–103 (RQ) contribute to the ATP site. Mg(2+) is bound by residues H136 and D176. Residue K199 is part of the active site. D-ribose 5-phosphate-binding positions include R201, D225, and 229–233 (DTAGT).

Belongs to the ribose-phosphate pyrophosphokinase family. Class I subfamily. As to quaternary structure, homohexamer. Mg(2+) serves as cofactor.

It localises to the cytoplasm. The catalysed reaction is D-ribose 5-phosphate + ATP = 5-phospho-alpha-D-ribose 1-diphosphate + AMP + H(+). The protein operates within metabolic intermediate biosynthesis; 5-phospho-alpha-D-ribose 1-diphosphate biosynthesis; 5-phospho-alpha-D-ribose 1-diphosphate from D-ribose 5-phosphate (route I): step 1/1. Functionally, involved in the biosynthesis of the central metabolite phospho-alpha-D-ribosyl-1-pyrophosphate (PRPP) via the transfer of pyrophosphoryl group from ATP to 1-hydroxyl of ribose-5-phosphate (Rib-5-P). The polypeptide is Ribose-phosphate pyrophosphokinase 1 (Listeria monocytogenes serotype 4b (strain F2365)).